A 139-amino-acid chain; its full sequence is Large-conductance mechanosensitive channel (139 aa).

A run of 2 helical transmembrane segments spans residues 9–29 (AFAV…GAAF) and 79–99 (IQTV…VKAI).

The protein belongs to the MscL family. Homopentamer.

It localises to the cell inner membrane. Channel that opens in response to stretch forces in the membrane lipid bilayer. May participate in the regulation of osmotic pressure changes within the cell. The protein is Large-conductance mechanosensitive channel of Pseudomonas putida (strain GB-1).